We begin with the raw amino-acid sequence, 628 residues long: Somatic embryogenesis receptor kinase 2 (628 aa).

An N-terminal signal peptide occupies residues 1-29 (MGRKKFEAFGFVCLISLLLLFNSLWLASS). Topologically, residues 30-241 (NMEGDALHSL…PTPGGYSATG (212 aa)) are extracellular. Positions 45–85 (DPNNVLQSWDPTLVNPCTWFHVTCNNENSVIRVDLGNADLS) are PSKR1 binding. The segment at 56-58 (TLV) is CLE44 binding. C61 and C68 form a disulfide bridge. Leucine-rich repeat receptor-like protein kinase binding stretches follow at residues 62-81 (TWFH…DLGN) and 100-105 (YLELYS). 64-65 (FH) provides a ligand contact to brassinolide. 4 LRR repeats span residues 95 to 119 (LKNL…LGNL), 121 to 143 (NLVS…LGKL), 144 to 167 (FKLR…LTNI), and 168 to 192 (MTLQ…SFSL). N-linked (GlcNAc...) asparagine glycosylation is found at N107 and N118. Leucine-rich repeat receptor-like protein kinase binding regions lie at residues 126-129 (DLYL) and 148-150 (FLR). N-linked (GlcNAc...) asparagine glycans are attached at residues N153 and N187. The tract at residues 174–197 (DLSNNRLSGSVPDNGSFSLFTPIS) is leucine-rich repeat receptor-like protein kinase binding. C205 and C213 are disulfide-bonded. A helical membrane pass occupies residues 242-262 (AIAGGVAAGAALLFAAPALAF). The Cytoplasmic segment spans residues 263–628 (AWWRRRKPQE…LHAMELSGPR (366 aa)). At T302 the chain carries Phosphothreonine. The region spanning 305-592 (FSNKNILGRG…GLAEKWDEWQ (288 aa)) is the Protein kinase domain. ATP is bound at residue 311 to 319 (LGRGGFGKV). At T328 the chain carries Phosphothreonine. Position 333 (K333) interacts with ATP. 2 positions are modified to phosphoserine: S386 and S389. The Proton acceptor role is filled by D432. Phosphothreonine occurs at positions 462, 465, 466, and 471. Y479 carries the post-translational modification Phosphotyrosine. The residue at position 481 (S481) is a Phosphoserine. A Phosphothreonine modification is found at T482. Position 486 is a phosphoserine (S486). Position 562 is a phosphothreonine (T562). Phosphoserine is present on S604. T616 carries the post-translational modification Phosphothreonine. The residue at position 625 (S625) is a Phosphoserine.

This sequence belongs to the protein kinase superfamily. Ser/Thr protein kinase family. In terms of assembly, homo- and heterodimer. Component of the SERK1 signaling complex, composed of KAPP, CDC48A, GRF6 or GRF7, SERK1, SERK2, SERK3/BAK1 and BRI1. Bind to BRI1 in a brassinolide-dependent manner. Heterodimer with PSKR1. Interacts with the EF-Tu receptor EFR and FLS2 in a specific ligand-induced manner. Interacts with ERECTA in a EPF2-induced manner. Interacts with ERL1 in a EPF1-induced manner. Interacts with TMM. In the presence of the signal peptide RGF1, interacts with RGI3/RGFR1 and RGI4/RGFR2/SKM2. Binds to the peptide CLE44 in the presence of TDR. Post-translationally, autophosphorylated. In terms of tissue distribution, expressed in flowers, tapetum, developing microspores, all cells of the embryo sac, provascular strands and developing vascular bundles. Low expression in adult vascular tissue.

The protein resides in the cell membrane. The enzyme catalyses L-seryl-[protein] + ATP = O-phospho-L-seryl-[protein] + ADP + H(+). It carries out the reaction L-threonyl-[protein] + ATP = O-phospho-L-threonyl-[protein] + ADP + H(+). Functionally, serine/threonine-kinase involved in brassinosteroid-dependent and -independent signaling pathways. Acts redundantly with SERK1 as a control point for sporophytic development controlling male gametophyte production. Serves as coreceptor to small peptide (e.g. RGF1 and CLE44) signaling. Involved in the perception of phytosulfokine and subsequent signal transduction. The chain is Somatic embryogenesis receptor kinase 2 from Arabidopsis thaliana (Mouse-ear cress).